We begin with the raw amino-acid sequence, 143 residues long: MESSEVMIMRIIQTAGKRKSAVARATIKEGNGRVRVNYKPVEILEPEIARFTIMEPLVIAGEEILGKVDVDVKVEGGGFMGQAEAARIAIARALVEWTGDMNLKEKFMKYDRTMLVGDSRRTEPHKPNRSTKGPRAKRQKSYR.

Residues D118–R143 are disordered. Positions P127–R143 are enriched in basic residues.

This sequence belongs to the universal ribosomal protein uS9 family.

The polypeptide is Small ribosomal subunit protein uS9 (Thermococcus sibiricus (strain DSM 12597 / MM 739)).